A 942-amino-acid chain; its full sequence is Isoleucine--tRNA ligase (942 aa).

The 'HIGH' region signature appears at 58 to 68; it reads PYVNGSIHLGH. E564 is an L-isoleucyl-5'-AMP binding site. The short motif at 605–609 is the 'KMSKS' region element; that stretch reads KMSKS. K608 is an ATP binding site. C905, C908, C925, and C928 together coordinate Zn(2+).

Belongs to the class-I aminoacyl-tRNA synthetase family. IleS type 1 subfamily. Monomer. The cofactor is Zn(2+).

It is found in the cytoplasm. The enzyme catalyses tRNA(Ile) + L-isoleucine + ATP = L-isoleucyl-tRNA(Ile) + AMP + diphosphate. Functionally, catalyzes the attachment of isoleucine to tRNA(Ile). As IleRS can inadvertently accommodate and process structurally similar amino acids such as valine, to avoid such errors it has two additional distinct tRNA(Ile)-dependent editing activities. One activity is designated as 'pretransfer' editing and involves the hydrolysis of activated Val-AMP. The other activity is designated 'posttransfer' editing and involves deacylation of mischarged Val-tRNA(Ile). The protein is Isoleucine--tRNA ligase of Blochmanniella pennsylvanica (strain BPEN).